We begin with the raw amino-acid sequence, 219 residues long: Lipid transferase CIDEA (219 aa).

The CIDE-N domain maps to 33–110 (PARPFRVSNH…ILEKGQKWMP (78 aa)). Residues 163-180 (CTGLKGLLRSLLRFLSYS) are amphipathic helix.

This sequence belongs to the CIDE family. Homodimer. Interacts with CIDEC. Directly interacts with CEBPB. Interacts with isoform CLSTN3beta of CLSTN3; inhibiting the lipid transferase activity of CIDEA. Expressed in omental and subcutaneous adipose tissue (at protein level).

It is found in the lipid droplet. The protein localises to the nucleus. It carries out the reaction a triacyl-sn-glycerol(in) = a triacyl-sn-glycerol(out). Functionally, lipid transferase that promotes unilocular lipid droplet formation by mediating lipid droplet fusion. Lipid droplet fusion promotes their enlargement, restricting lipolysis and favoring lipid storage. Localizes on the lipid droplet surface, at focal contact sites between lipid droplets, and mediates atypical lipid droplet fusion by promoting directional net neutral lipid transfer from the smaller to larger lipid droplets. The transfer direction may be driven by the internal pressure difference between the contacting lipid droplet pair and occurs at a lower rate than that promoted by CIDEC. May also act as a CEBPB coactivator in epithelial cells to control the expression of a subset of CEBPB downstream target genes, including ID2, IGF1, PRLR, SOCS1, SOCS3, XDH, but not casein. By interacting with CEBPB, strengthens the association of CEBPB with the XDH promoter, increases histone acetylation and dissociates HDAC1 from the promoter. When overexpressed, induces apoptosis; the physiological significance of its role in apoptosis is unclear. The polypeptide is Lipid transferase CIDEA (Homo sapiens (Human)).